Consider the following 89-residue polypeptide: Small ribosomal subunit protein uS15 (89 aa).

It belongs to the universal ribosomal protein uS15 family. In terms of assembly, part of the 30S ribosomal subunit. Forms a bridge to the 50S subunit in the 70S ribosome, contacting the 23S rRNA.

One of the primary rRNA binding proteins, it binds directly to 16S rRNA where it helps nucleate assembly of the platform of the 30S subunit by binding and bridging several RNA helices of the 16S rRNA. In terms of biological role, forms an intersubunit bridge (bridge B4) with the 23S rRNA of the 50S subunit in the ribosome. The polypeptide is Small ribosomal subunit protein uS15 (Mycolicibacterium smegmatis (strain ATCC 700084 / mc(2)155) (Mycobacterium smegmatis)).